The chain runs to 195 residues: Probable nicotinate-nucleotide adenylyltransferase (195 aa).

It belongs to the NadD family.

It carries out the reaction nicotinate beta-D-ribonucleotide + ATP + H(+) = deamido-NAD(+) + diphosphate. Its pathway is cofactor biosynthesis; NAD(+) biosynthesis; deamido-NAD(+) from nicotinate D-ribonucleotide: step 1/1. In terms of biological role, catalyzes the reversible adenylation of nicotinate mononucleotide (NaMN) to nicotinic acid adenine dinucleotide (NaAD). The protein is Probable nicotinate-nucleotide adenylyltransferase of Dictyoglomus thermophilum (strain ATCC 35947 / DSM 3960 / H-6-12).